Here is a 493-residue protein sequence, read N- to C-terminus: Keratin, type II cuticular Hb3 (493 aa).

Positions 1–111 (MTCGFNSIGC…PNAQCVKQEE (111 aa)) are head. An IF rod domain is found at 111 to 422 (EKEQIKSLNS…RLLEGEEQRL (312 aa)). A coil 1A region spans residues 112-146 (KEQIKSLNSRFAAFIDKVRFLEQQNKLLETKLQFY). Residues 147-156 (QNRECCQSNL) are linker 1. The segment at 157 to 257 (EPLFAGYIET…YEEEIRILQS (101 aa)) is coil 1B. Lys-217 is covalently cross-linked (Glycyl lysine isopeptide (Lys-Gly) (interchain with G-Cter in SUMO1)). The interval 258-274 (HISDTSVVVKLDNSRDL) is linker 12. A coil 2 region spans residues 275–418 (NMDCIVAEIK…ATYRRLLEGE (144 aa)). The tail stretch occupies residues 419-493 (EQRLCEGVEA…GGGSCGQGRH (75 aa)).

The protein belongs to the intermediate filament family. In terms of assembly, heterotetramer of two type I and two type II keratins. Synthesis begins in the cortex 10-15 cell layers above the apex of the dermal papilla and ends abruptly in the middle of the cortex.

The polypeptide is Keratin, type II cuticular Hb3 (KRT83) (Homo sapiens (Human)).